Here is a 150-residue protein sequence, read N- to C-terminus: 3-hydroxyacyl-[acyl-carrier-protein] dehydratase FabZ (150 aa).

The active site involves histidine 47.

The protein belongs to the thioester dehydratase family. FabZ subfamily.

The protein resides in the cytoplasm. It catalyses the reaction a (3R)-hydroxyacyl-[ACP] = a (2E)-enoyl-[ACP] + H2O. In terms of biological role, involved in unsaturated fatty acids biosynthesis. Catalyzes the dehydration of short chain beta-hydroxyacyl-ACPs and long chain saturated and unsaturated beta-hydroxyacyl-ACPs. This is 3-hydroxyacyl-[acyl-carrier-protein] dehydratase FabZ from Verminephrobacter eiseniae (strain EF01-2).